Here is a 637-residue protein sequence, read N- to C-terminus: Serine protease Hayan (637 aa).

The N-terminal stretch at 1 to 26 is a signal peptide; it reads MAMISARRYFLLGLLVLTTSAYVTVG. One can recognise a Clip domain in the interval 31–79; sequence PCQVRSDIPGICLSSSACENIRGYLKSGTLSTSQVPSCGFGAREEIICC. Cystine bridges form between Cys32–Cys78, Cys42–Cys68, and Cys48–Cys79. Disordered regions lie at residues 95–137, 152–178, 216–260, and 286–365; these read FHAT…LDEN, KPQK…SMKM, QRSF…NNNN, and LQTT…EKER. A compositionally biased stretch (basic and acidic residues) spans 125 to 136; that stretch reads EGKRERESRLDE. The span at 234–244 shows a compositional bias: polar residues; sequence PLTTPRSRPQR. Residues 245-260 show a composition bias toward low complexity; the sequence is PNNSNFNTNPSPNNNN. Over residues 306–320 the composition is skewed to basic and acidic residues; that stretch reads EPYRFRGQDRDKDTQ. Residues 321–332 are compositionally biased toward polar residues; the sequence is PQEPWNDVSNNL. 4 disulfide bridges follow: Cys371–Cys497, Cys414–Cys430, Cys543–Cys567, and Cys578–Cys609. One can recognise a Peptidase S1 domain in the interval 385–632; it reads ILDGERVDRG…FLDYIEGIVW (248 aa). Catalysis depends on charge relay system residues His429 and Asp477. Residue Ser582 is the Charge relay system of the active site.

The protein belongs to the peptidase S1 family. CLIP subfamily.

Its subcellular location is the secreted. Serine protease which, by converting prophenoloxidase 1 (PPO1) into its active form, plays an essential role in the melanization immune response to physical or septic wounding. May function in diverse PPO1-activating cascades that are negatively controlled by different serpin proteins; Spn27A and Spn28D in the hemolymph, and Spn28D and Spn77BA in the trachea. Also required in the systematic wound response by mediating the redox-dependent activation of the JNK cytoprotective cascade in neuronal tissues after integument wounding. This is Serine protease Hayan from Drosophila melanogaster (Fruit fly).